A 683-amino-acid chain; its full sequence is Methionine--tRNA ligase (683 aa).

The 'HIGH' region signature appears at 15–25; that stretch reads YYPSGKLHIGN. The 'KMSKS' region motif lies at 311-315; it reads KMSKS. K314 lines the ATP pocket. Residues 581-683 form the tRNA-binding domain; sequence DFDKVELKVA…DNMVNGSLIS (103 aa).

The protein belongs to the class-I aminoacyl-tRNA synthetase family. MetG type 2B subfamily. In terms of assembly, homodimer.

Its subcellular location is the cytoplasm. The catalysed reaction is tRNA(Met) + L-methionine + ATP = L-methionyl-tRNA(Met) + AMP + diphosphate. Is required not only for elongation of protein synthesis but also for the initiation of all mRNA translation through initiator tRNA(fMet) aminoacylation. The polypeptide is Methionine--tRNA ligase (Lactiplantibacillus plantarum (strain ATCC BAA-793 / NCIMB 8826 / WCFS1) (Lactobacillus plantarum)).